A 672-amino-acid polypeptide reads, in one-letter code: ABC transporter G family member 21 (672 aa).

The span at 1 to 35 (MMPPNEQESSFPKTPSANRHETSPVQENRFSSPSH) shows a compositional bias: polar residues. The interval 1-59 (MMPPNEQESSFPKTPSANRHETSPVQENRFSSPSHVNPCLDDDNDHDGPSHQSRQSSVL) is disordered. Positions 50-59 (SHQSRQSSVL) are enriched in low complexity. Positions 68–322 (LKFEELTYSI…FGSIGYQPGS (255 aa)) constitute an ABC transporter domain. 117–124 (GPSGSGKT) serves as a coordination point for ATP. The region spanning 411-617 (MQFSVLLKRG…CYKLLVGVQY (207 aa)) is the ABC transmembrane type-2 domain. 6 helical membrane passes run 429–449 (FSGLRIFMVMSVSLLSGLLWW), 460–480 (VGLLFFFSIFWGFFPLFNAIF), 512–532 (LPMELILPTIFVTITYWMGGL), 543–563 (LMIVLYNVLVAQGVGLALGAI), 576–596 (VLMLVFLLAGGYYIQHIPGFI), and 649–669 (WDVLALAVMLLLYRVLAYLAL).

The protein belongs to the ABC transporter superfamily. ABCG family. Eye pigment precursor importer (TC 3.A.1.204) subfamily.

Its subcellular location is the membrane. The protein is ABC transporter G family member 21 (ABCG21) of Arabidopsis thaliana (Mouse-ear cress).